A 622-amino-acid polypeptide reads, in one-letter code: Low affinity potassium transport system protein Kup (622 aa).

12 consecutive transmembrane segments (helical) span residues 12 to 32, 49 to 69, 101 to 121, 134 to 154, 163 to 183, 213 to 233, 247 to 267, 276 to 296, 337 to 357, 363 to 383, 395 to 415, and 419 to 439; these read ITLA…LYTL, VFGF…LKYL, FLVI…VITP, IIAP…LTLL, GLVG…LAAL, VSFV…ALYA, WFTV…ALLL, PFFL…ATLA, IYIP…IVSF, LAAA…ILST, FLVA…FSAN, and IVSG…VMTT.

The protein belongs to the HAK/KUP transporter (TC 2.A.72) family.

Its subcellular location is the cell inner membrane. It carries out the reaction K(+)(in) + H(+)(in) = K(+)(out) + H(+)(out). Responsible for the low-affinity transport of potassium into the cell. Likely operates as a K(+):H(+) symporter. In Enterobacter sp. (strain 638), this protein is Low affinity potassium transport system protein Kup.